Consider the following 507-residue polypeptide: FAD-linked oxidoreductase OXR1 (507 aa).

Residues 1–21 (MTIKFASLILAGLGLGSGALG) form the signal peptide. N34 and N65 each carry an N-linked (GlcNAc...) asparagine glycan. An FAD-binding PCMH-type domain is found at 73 to 245 (YAPPTFKVSV…VSATYKLKPL (173 aa)). Residues N263 and N288 are each glycosylated (N-linked (GlcNAc...) asparagine).

It belongs to the oxygen-dependent FAD-linked oxidoreductase family. FAD serves as cofactor.

It catalyses the reaction dihydropyriculol + A = pyriculol + AH2. It carries out the reaction dihydropyriculariol + A = pyriculariol + AH2. The protein operates within polyketide biosynthesis. FAD-linked oxidoreductase; part of the gene cluster that mediates the biosynthesis of pyriculol and pyriculariol, two heptaketides that induce lesion formation upon application on rice leaves but are dispensable for pathogenicity. The highly reducing polyketide synthase synthesizes the heptaketide backbone of pyriculol and pyriculariol. Pyriculol and pyriculariol contain several hydroxyl moieties and double bonds, so it can be assumed that several reduction steps occur during biosynthesis. These reactions could be executed by PKS19 itself or partly by the tailoring enzymes OXR1, OXR2, RED1, RED2 or RED3, identified within the cluster. The FAD-linked oxidoreductase OXR1 is the only tailoring enzyme for which the function has been determined yet, and is involved in the oxidation of dihydropyriculol and dihydropyriculariol into pyriculol and pyriculariol, respectively. The chain is FAD-linked oxidoreductase OXR1 from Pyricularia oryzae (strain 70-15 / ATCC MYA-4617 / FGSC 8958) (Rice blast fungus).